The primary structure comprises 345 residues: S-adenosylmethionine:tRNA ribosyltransferase-isomerase (345 aa).

It belongs to the QueA family. Monomer.

The protein resides in the cytoplasm. The enzyme catalyses 7-aminomethyl-7-carbaguanosine(34) in tRNA + S-adenosyl-L-methionine = epoxyqueuosine(34) in tRNA + adenine + L-methionine + 2 H(+). The protein operates within tRNA modification; tRNA-queuosine biosynthesis. Its function is as follows. Transfers and isomerizes the ribose moiety from AdoMet to the 7-aminomethyl group of 7-deazaguanine (preQ1-tRNA) to give epoxyqueuosine (oQ-tRNA). The polypeptide is S-adenosylmethionine:tRNA ribosyltransferase-isomerase (Shewanella sp. (strain MR-7)).